Reading from the N-terminus, the 354-residue chain is Guanine nucleotide-binding protein G(o) subunit alpha (354 aa).

A lipid anchor (N-myristoyl glycine) is attached at G2. C3 is lipidated: S-palmitoyl cysteine. The G-alpha domain occupies K32–Y354. The tract at residues K35–T48 is G1 motif. GTP contacts are provided by residues G40–S47, L176–T182, D201–Q205, N270–D273, and A326. S47 and T182 together coordinate Mg(2+). The G2 motif stretch occupies residues D174–T182. Residues F197–R206 are G3 motif. The segment at I266 to D273 is G4 motif. The G5 motif stretch occupies residues T324–T329.

This sequence belongs to the G-alpha family. G(i/o/t/z) subfamily. As to quaternary structure, g proteins are composed of 3 units; alpha, beta and gamma. The alpha chain contains the guanine nucleotide binding site.

In terms of biological role, guanine nucleotide-binding proteins (G proteins) are involved as modulators or transducers in various transmembrane signaling systems. The G(o) protein function is not clear. This Planorbella trivolvis (Marsh rams-horn) protein is Guanine nucleotide-binding protein G(o) subunit alpha.